The primary structure comprises 344 residues: Phosphate acyltransferase (344 aa).

The protein belongs to the PlsX family. In terms of assembly, homodimer. Probably interacts with PlsY.

The protein resides in the cytoplasm. The enzyme catalyses a fatty acyl-[ACP] + phosphate = an acyl phosphate + holo-[ACP]. It participates in lipid metabolism; phospholipid metabolism. Catalyzes the reversible formation of acyl-phosphate (acyl-PO(4)) from acyl-[acyl-carrier-protein] (acyl-ACP). This enzyme utilizes acyl-ACP as fatty acyl donor, but not acyl-CoA. The sequence is that of Phosphate acyltransferase from Sodalis glossinidius (strain morsitans).